The sequence spans 362 residues: Type II methyltransferase M.MamI (362 aa).

This sequence belongs to the N(4)/N(6)-methyltransferase family.

The catalysed reaction is a 2'-deoxyadenosine in DNA + S-adenosyl-L-methionine = an N(6)-methyl-2'-deoxyadenosine in DNA + S-adenosyl-L-homocysteine + H(+). A gamma subtype methylase that recognizes the double-stranded sequence 5'-GATNNNNATC-3', methylates A-? on both strands, and protects the DNA from cleavage by the MamI endonuclease. The protein is Type II methyltransferase M.MamI of Microbacterium ammoniaphilum.